Here is a 718-residue protein sequence, read N- to C-terminus: Acetolactate synthase, mitochondrial (718 aa).

Disordered regions lie at residues 1–53 (MLTR…YDTP) and 75–99 (QSSASTAAASPAVRPQPAQHFQAAP). A compositionally biased stretch (polar residues) spans 32-45 (RYSNNIHTSSTQNA). Residues 76–99 (SSASTAAASPAVRPQPAQHFQAAP) are compositionally biased toward low complexity. Thiamine diphosphate is bound at residue glutamate 173. Arginine 275 is an FAD binding site. The tract at residues 301–326 (VQPGHSPYLPSNPLNPSSQPSDPLPG) is disordered. Positions 306–325 (SPYLPSNPLNPSSQPSDPLP) are enriched in low complexity. FAD-binding positions include 397–418 (HGSAYANFAMQEADVLIALGVR) and 449–468 (EIQPKNINKIVEAQIPVLGD). The interval 541–621 (QHQMWACQYY…VKVLLFNNEF (81 aa)) is thiamine pyrophosphate binding. Positions 592 and 619 each coordinate Mg(2+).

The protein belongs to the TPP enzyme family. It depends on Mg(2+) as a cofactor. Thiamine diphosphate is required as a cofactor.

The protein localises to the mitochondrion. The enzyme catalyses 2 pyruvate + H(+) = (2S)-2-acetolactate + CO2. It functions in the pathway amino-acid biosynthesis; L-isoleucine biosynthesis; L-isoleucine from 2-oxobutanoate: step 1/4. The protein operates within amino-acid biosynthesis; L-valine biosynthesis; L-valine from pyruvate: step 1/4. In Cryptococcus neoformans var. grubii serotype A (strain H99 / ATCC 208821 / CBS 10515 / FGSC 9487) (Filobasidiella neoformans var. grubii), this protein is Acetolactate synthase, mitochondrial (ILV2).